We begin with the raw amino-acid sequence, 401 residues long: NADH-quinone oxidoreductase subunit D 2 (401 aa).

It belongs to the complex I 49 kDa subunit family. In terms of assembly, NDH-1 is composed of 14 different subunits. Subunits NuoB, C, D, E, F, and G constitute the peripheral sector of the complex.

It localises to the cell inner membrane. The enzyme catalyses a quinone + NADH + 5 H(+)(in) = a quinol + NAD(+) + 4 H(+)(out). Functionally, NDH-1 shuttles electrons from NADH, via FMN and iron-sulfur (Fe-S) centers, to quinones in the respiratory chain. The immediate electron acceptor for the enzyme in this species is believed to be ubiquinone. Couples the redox reaction to proton translocation (for every two electrons transferred, four hydrogen ions are translocated across the cytoplasmic membrane), and thus conserves the redox energy in a proton gradient. The protein is NADH-quinone oxidoreductase subunit D 2 of Koribacter versatilis (strain Ellin345).